The chain runs to 76 residues: MKLISFTGLALLLIVSLIDVEAQNEGACIPHGSVCTTNHAGCCSKLSCDCYRRFEKGVEKGQICWCIETGVTFSKE.

An N-terminal signal peptide occupies residues M1–A22. A propeptide spanning residues Q23–G26 is cleaved from the precursor.

The protein belongs to the neurotoxin 19 (CSTX) family. 07 (U7-Lctx) subfamily. Post-translationally, contains 4 disulfide bonds. Expressed by the venom gland.

It localises to the secreted. This is U7-lycotoxin-Ls1b from Lycosa singoriensis (Wolf spider).